The chain runs to 390 residues: MLEFEQGFNHLATLKVIGVGGGGNNAVNRMIDHGMNNVEFIAINTDGQALNLSKAESKIQIGEKLTRGLGAGANPEIGKKAAEESREQIEDAIQGADMVFVTSGMGGGTGTGAAPVVAKIAKEMGALTVGVVTRPFSFEGRKRQTQAAAGVEAMKAAVDTLIVIPNDRLLDIVDKSTPMMEAFKEADNVLRQGVQGISDLIAVSGEVNLDFADVKTIMSNQGSALMGIGVSSGENRAVEAAKKAISSPLLETSIVGAQGVLMNITGGESLSLFEAQEAADIVQDAADEDVNMIFGTVINPELQDEIVVTVIATGFDDKPTSHGRKSGSTGFGTSVNTSSNATSKDESFTSNSSNAQATDSVSERTHTTKEDDIPSFIRNREERRSRRTRR.

Residues 21 to 25 (GGGNN), 108 to 110 (GTG), Glu139, Arg143, and Asp187 contribute to the GTP site. Positions 315–390 (FDDKPTSHGR…EERRSRRTRR (76 aa)) are disordered. Residues 326–360 (SGSTGFGTSVNTSSNATSKDESFTSNSSNAQATDS) are compositionally biased toward polar residues. Positions 361-384 (VSERTHTTKEDDIPSFIRNREERR) are enriched in basic and acidic residues.

The protein belongs to the FtsZ family. As to quaternary structure, homodimer. Polymerizes to form a dynamic ring structure in a strictly GTP-dependent manner. Interacts directly with several other division proteins.

It is found in the cytoplasm. In terms of biological role, essential cell division protein that forms a contractile ring structure (Z ring) at the future cell division site. The regulation of the ring assembly controls the timing and the location of cell division. One of the functions of the FtsZ ring is to recruit other cell division proteins to the septum to produce a new cell wall between the dividing cells. Binds GTP and shows GTPase activity. This is Cell division protein FtsZ from Staphylococcus aureus (strain NCTC 8325 / PS 47).